The sequence spans 229 residues: Ribosome maturation factor RimM (229 aa).

Residues 1–39 form a disordered region; sequence MAGHDSGSAKRGRSPSFGVFVRKPVERAPTKGAGDGAAD. The PRC barrel domain occupies 148–229; that stretch reads ADEFYWVDLI…RIVVDWEADY (82 aa).

The protein belongs to the RimM family. Binds ribosomal protein uS19.

It localises to the cytoplasm. Functionally, an accessory protein needed during the final step in the assembly of 30S ribosomal subunit, possibly for assembly of the head region. Essential for efficient processing of 16S rRNA. May be needed both before and after RbfA during the maturation of 16S rRNA. It has affinity for free ribosomal 30S subunits but not for 70S ribosomes. In Burkholderia thailandensis (strain ATCC 700388 / DSM 13276 / CCUG 48851 / CIP 106301 / E264), this protein is Ribosome maturation factor RimM.